Here is a 234-residue protein sequence, read N- to C-terminus: Large ribosomal subunit protein uL1 (234 aa).

Belongs to the universal ribosomal protein uL1 family. Part of the 50S ribosomal subunit.

Binds directly to 23S rRNA. The L1 stalk is quite mobile in the ribosome, and is involved in E site tRNA release. Its function is as follows. Protein L1 is also a translational repressor protein, it controls the translation of the L11 operon by binding to its mRNA. The sequence is that of Large ribosomal subunit protein uL1 from Geobacter metallireducens (strain ATCC 53774 / DSM 7210 / GS-15).